Consider the following 329-residue polypeptide: 4-methyl-2-oxopentanoate reductase A (329 aa).

NAD(+)-binding positions include 162 to 163, 240 to 242, and Asp266; these read GI and TAR. The active site involves Arg242. Glu271 is a catalytic residue. His289 serves as the catalytic Proton donor.

Belongs to the D-isomer specific 2-hydroxyacid dehydrogenase family.

It carries out the reaction (2R)-hydroxy-4-methylpentanoate + NADP(+) = 4-methyl-2-oxopentanoate + NADPH + H(+). The catalysed reaction is a (2R)-2-hydroxycarboxylate + NADP(+) = a 2-oxocarboxylate + NADPH + H(+). In terms of biological role, 4-methyl-2-oxopentanoate (MOA) reductase that reduces MOA, a possible intermediate in leucine synthesis, to D-leucate in a NADPH- or NADH-dependent manner, but with a preference for NADPH. In addition to MOA, shows broad substrate specificity toward 2-keto acids. This is 4-methyl-2-oxopentanoate reductase A from Aspergillus oryzae (strain ATCC 42149 / RIB 40) (Yellow koji mold).